The chain runs to 208 residues: V-type ATP synthase subunit E (208 aa).

The protein belongs to the V-ATPase E subunit family.

Functionally, produces ATP from ADP in the presence of a proton gradient across the membrane. This is V-type ATP synthase subunit E (atpE) from Chlamydia muridarum (strain MoPn / Nigg).